Here is a 480-residue protein sequence, read N- to C-terminus: Proline--tRNA ligase (480 aa).

Belongs to the class-II aminoacyl-tRNA synthetase family. ProS type 3 subfamily. Homodimer.

The protein resides in the cytoplasm. The enzyme catalyses tRNA(Pro) + L-proline + ATP = L-prolyl-tRNA(Pro) + AMP + diphosphate. Catalyzes the attachment of proline to tRNA(Pro) in a two-step reaction: proline is first activated by ATP to form Pro-AMP and then transferred to the acceptor end of tRNA(Pro). In Pyrococcus horikoshii (strain ATCC 700860 / DSM 12428 / JCM 9974 / NBRC 100139 / OT-3), this protein is Proline--tRNA ligase.